A 207-amino-acid chain; its full sequence is Anthranilate synthase component II (207 aa).

One can recognise a Glutamine amidotransferase type-1 domain in the interval 17–207; that stretch reads RVLFVDNFDS…DVIRNFLAGL (191 aa). 66-68 lines the L-glutamine pocket; the sequence is GPG. Cysteine 96 serves as the catalytic Nucleophile; for GATase activity. 146–147 is an L-glutamine binding site; sequence SL. Catalysis depends on residues histidine 187 and glutamate 189.

In terms of assembly, tetramer of two components I and two components II.

The enzyme catalyses chorismate + L-glutamine = anthranilate + pyruvate + L-glutamate + H(+). The protein operates within amino-acid biosynthesis; L-tryptophan biosynthesis; L-tryptophan from chorismate: step 1/5. In Haloarcula marismortui (strain ATCC 43049 / DSM 3752 / JCM 8966 / VKM B-1809) (Halobacterium marismortui), this protein is Anthranilate synthase component II (trpG1).